We begin with the raw amino-acid sequence, 686 residues long: Protein-glutamine gamma-glutamyltransferase 2 (686 aa).

Residue Ala-2 is modified to N-acetylalanine. Cystine bridges form between Cys-230-Cys-370 and Cys-370-Cys-371. Residues Cys-277, His-335, and Asp-358 contribute to the active site. Ca(2+)-binding residues include Asn-398, Asp-400, Glu-437, Glu-447, and Glu-452. Position 468 is an N6-acetyllysine (Lys-468). 476–483 (RIRVGDSM) is a GTP binding site. Ca(2+) is bound at residue Glu-538. Position 579 to 582 (579 to 582 (RDLY)) interacts with GTP. An Isoglutamyl lysine isopeptide (Gln-Lys) (interchain with K-?) cross-link involves residue Gln-632.

This sequence belongs to the transglutaminase superfamily. Transglutaminase family. In terms of assembly, monomer. Interacts with phospholipase C; promoting alpha-1 adrenergic receptor signaling. Interacts with PLCD1. It depends on Ca(2+) as a cofactor. In terms of processing, disulfide bond formation inactivates the calcium-dependent acyltransferase activity. Cys-370 can form disulfide bonds with both Cys-230 and Cys-371: formation of a disulfide bond between Cys-230 and Cys-370 facilitates formation of the disulfide between Cys-370 and Cys-371, which promotes inactivation of the acyltransferase activity. May also form interchain disulfids between Cys-230 and Cys-370. Ca(2+) protects against disulfide bond formation and inactivation. Post-translationally, auto-transglutaminated: Forms covalent cross-links mediated by transglutaminase between Gln-632 and the epsilon-amino group of a lysine residue of itself or HMGB1, forming homopolymers and heteropolymers, respectively. S-nitrosylated, leading to inactivation of the acyltransferase activity.

Its subcellular location is the cytoplasm. It is found in the cytosol. It localises to the nucleus. The protein resides in the chromosome. The protein localises to the secreted. Its subcellular location is the extracellular space. It is found in the extracellular matrix. It localises to the cell membrane. The protein resides in the mitochondrion. It catalyses the reaction L-glutaminyl-[protein] + L-lysyl-[protein] = [protein]-L-lysyl-N(6)-5-L-glutamyl-[protein] + NH4(+). It carries out the reaction L-glutaminyl-[protein] + serotonin = 5-serotonyl-L-glutamyl-[protein] + NH4(+). The catalysed reaction is L-glutaminyl-[protein] + dopamine = 5-dopaminyl-L-glutamyl-[protein] + NH4(+). The enzyme catalyses L-glutaminyl-[protein] + histamine = 5-histaminyl-L-glutamyl-[protein] + NH4(+). It catalyses the reaction L-glutaminyl-[protein] + (R)-noradrenaline = 5-(R)-noradrenalinyl-L-glutamyl-[protein] + NH4(+). It carries out the reaction L-glutaminyl-[protein] + H2O = L-glutamyl-[protein] + NH4(+). Its activity is regulated as follows. Acyltransferase activity is regulated by the binding of GTP and Ca(2+): inactivated by GTP, which stabilizes its closed structure, thereby obstructing the accessibility of substrates to the active sites. In contrast, Ca(2+) acts as a cofactor by inducing conformational change to the active open form. In absence of Ca(2+), Mg(2+) may bind Ca(2+)-binding sites, promoting GTP-binding and subsequent inhibition of the acyltransferase activity. Extracellularly reduced and activated by CLIC3. In terms of biological role, calcium-dependent acyltransferase that catalyzes the formation of covalent bonds between peptide-bound glutamine and various primary amines, such as gamma-amino group of peptide-bound lysine, or mono- and polyamines, thereby producing cross-linked or aminated proteins, respectively. Involved in many biological processes, such as bone development, angiogenesis, wound healing, cellular differentiation, chromatin modification and apoptosis. Acts as a protein-glutamine gamma-glutamyltransferase by mediating the cross-linking of proteins, such as ACO2, HSPB6, FN1, HMGB1, RAP1GDS1, SLC25A4/ANT1, SPP1 and WDR54. Under physiological conditions, the protein cross-linking activity is inhibited by GTP; inhibition is relieved by Ca(2+) in response to various stresses. When secreted, catalyzes cross-linking of proteins of the extracellular matrix, such as FN1 and SPP1 resulting in the formation of scaffolds. Plays a key role during apoptosis, both by (1) promoting the cross-linking of cytoskeletal proteins resulting in condensation of the cytoplasm, and by (2) mediating cross-linking proteins of the extracellular matrix, resulting in the irreversible formation of scaffolds that stabilize the integrity of the dying cells before their clearance by phagocytosis, thereby preventing the leakage of harmful intracellular components. In addition to protein cross-linking, can use different monoamine substrates to catalyze a vast array of protein post-translational modifications: mediates aminylation of serotonin, dopamine, noradrenaline or histamine into glutamine residues of target proteins to generate protein serotonylation, dopaminylation, noradrenalinylation or histaminylation, respectively. Mediates protein serotonylation of small GTPases during activation and aggregation of platelets, leading to constitutive activation of these GTPases. Plays a key role in chromatin organization by mediating serotonylation and dopaminylation of histone H3. Catalyzes serotonylation of 'Gln-5' of histone H3 (H3Q5ser) during serotonergic neuron differentiation, thereby facilitating transcription. Acts as a mediator of neurotransmission-independent role of nuclear dopamine in ventral tegmental area (VTA) neurons: catalyzes dopaminylation of 'Gln-5' of histone H3 (H3Q5dop), thereby regulating relapse-related transcriptional plasticity in the reward system. Regulates vein remodeling by mediating serotonylation and subsequent inactivation of ATP2A2/SERCA2. Also acts as a protein deamidase by mediating the side chain deamidation of specific glutamine residues of proteins to glutamate. Catalyzes specific deamidation of protein gliadin, a component of wheat gluten in the diet. May also act as an isopeptidase cleaving the previously formed cross-links. Also able to participate in signaling pathways independently of its acyltransferase activity: acts as a signal transducer in alpha-1 adrenergic receptor-mediated stimulation of phospholipase C-delta (PLCD) activity and is required for coupling alpha-1 adrenergic agonists to the stimulation of phosphoinositide lipid metabolism. The sequence is that of Protein-glutamine gamma-glutamyltransferase 2 from Mus musculus (Mouse).